The following is a 589-amino-acid chain: MSVSVHETRKSRSSTGSMNVTLFHKASHPDCVLAHLNTLRKHCMFTDVTLWAGDRAFPCHRAVLAASSRYFEAMFSHGLRESRDDTVNFQDNLHPEVLELLLDFAYSSRIAINEENAESLLEAGDMLQFHDVRDAAAEFLEKNLFPSNCLGMMLLSDAHQCRRLYEFSWRMCLVHFETVRQSEDFNSLSKDTLLDLISSDELETEDERVVFEAILQWVKHDLEPRKVHLPELLRSVRLALLPSDCLQEAVSSEALLMADERTKLIMDEALRCKTRILQNDGVVTSPCARPRKAGHTLLILGGQTFMCDKIYQVDHKAKEIIPKADLPSPRKEFSASAIGCKVYVTGGRGSENGVSKDVWVYDTVHEEWSKAAPMLIARFGHGSAELENCLYVVGGHTSLAGVFPASPSVSLKQVEKYDPGANKWMMVAPLRDGVSNAAVVSAKLKLFVFGGTSIHRDMVSKVQCYDPSENRWTIKAECPQPWRYTAAAVLGSQIFIMGGDTEFTAASAYRFDCETNQWTRIGDMTAKRMSCHALASGNKLYVVGGYFGTQRCKTLDCYDPTSDTWNCITTVPYSLIPTAFVSTWKHLPA.

The 69-residue stretch at 46–114 (TDVTLWAGDR…AYSSRIAINE (69 aa)) folds into the BTB domain. The BACK domain occupies 149–250 (CLGMMLLSDA…LPSDCLQEAV (102 aa)). 6 Kelch repeats span residues 296 to 340 (TLLI…AIGC), 341 to 388 (KVYV…ELEN), 389 to 444 (CLYV…SAKL), 446 to 492 (LFVF…VLGS), 494 to 538 (IFIM…ASGN), and 539 to 585 (KLYV…STWK).

Component of the BCR(KLHL25) E3 ubiquitin ligase complex, at least composed of CUL3, KLHL25 and RBX1.

Its pathway is protein modification; protein ubiquitination. Functionally, substrate-specific adapter of a BCR (BTB-CUL3-RBX1) E3 ubiquitin ligase complex involved in various processes, such as translation homeostasis and lipid synthesis. The BCR(KLHL25) ubiquitin ligase complex acts by mediating ubiquitination of hypophosphorylated EIF4EBP1 (4E-BP1): ubiquitination and subsequent degradation of hypophosphorylated EIF4EBP1 (4E-BP1) probably serves as a homeostatic mechanism to maintain translation and prevent eIF4E inhibition when eIF4E levels are low. The BCR(KLHL25) complex does not target EIF4EBP1 (4E-BP1) when it is hyperphosphorylated or associated with eIF4E. The BCR(KLHL25) complex also acts as a regulator of lipid synthesis by mediating ubiquitination and degradation of ACLY, thereby inhibiting lipid synthesis. BCR(KLHL25)-mediated degradation of ACLY promotes fatty acid oxidation and is required for differentiation of inducible regulatory T (iTreg) cells. This is Kelch-like protein 25 from Homo sapiens (Human).